The chain runs to 428 residues: Adenylosuccinate synthetase (428 aa).

GTP-binding positions include 12–18 (GDEGKGK) and 40–42 (GHT). D13 acts as the Proton acceptor in catalysis. D13 and G40 together coordinate Mg(2+). Residues 13 to 16 (DEGK), 38 to 41 (NAGH), T128, R142, Q223, T238, and R302 each bind IMP. H41 serves as the catalytic Proton donor. 298–304 (VTTGRPR) is a binding site for substrate. Residues R304, 330–332 (KLD), and 412–414 (GTG) each bind GTP.

The protein belongs to the adenylosuccinate synthetase family. Homodimer. It depends on Mg(2+) as a cofactor.

The protein resides in the cytoplasm. It catalyses the reaction IMP + L-aspartate + GTP = N(6)-(1,2-dicarboxyethyl)-AMP + GDP + phosphate + 2 H(+). It functions in the pathway purine metabolism; AMP biosynthesis via de novo pathway; AMP from IMP: step 1/2. Its function is as follows. Plays an important role in the de novo pathway of purine nucleotide biosynthesis. Catalyzes the first committed step in the biosynthesis of AMP from IMP. This is Adenylosuccinate synthetase from Bifidobacterium adolescentis (strain ATCC 15703 / DSM 20083 / NCTC 11814 / E194a).